The sequence spans 507 residues: BPI fold-containing family C protein (507 aa).

A signal peptide spans Met-1–Ser-23. Asn-79, Asn-92, and Asn-113 each carry an N-linked (GlcNAc...) asparagine glycan. A disulfide bridge links Cys-161 with Cys-200. N-linked (GlcNAc...) asparagine glycosylation is found at Asn-213, Asn-225, Asn-257, Asn-301, Asn-355, Asn-372, and Asn-415.

This sequence belongs to the BPI/LBP/Plunc superfamily. BPI/LBP family. In terms of tissue distribution, detected in the basal layer of the epidermis from inflammatory skin from psoriasis patients, but not in normal skin.

It localises to the secreted. The chain is BPI fold-containing family C protein (BPIFC) from Homo sapiens (Human).